The sequence spans 278 residues: 4-deoxy-L-threo-5-hexosulose-uronate ketol-isomerase (278 aa).

4 residues coordinate Zn(2+): His196, His198, Glu203, and His245.

It belongs to the KduI family. The cofactor is Zn(2+).

The enzyme catalyses 5-dehydro-4-deoxy-D-glucuronate = 3-deoxy-D-glycero-2,5-hexodiulosonate. It participates in glycan metabolism; pectin degradation; 2-dehydro-3-deoxy-D-gluconate from pectin: step 4/5. Its function is as follows. Catalyzes the isomerization of 5-dehydro-4-deoxy-D-glucuronate to 3-deoxy-D-glycero-2,5-hexodiulosonate. This chain is 4-deoxy-L-threo-5-hexosulose-uronate ketol-isomerase, found in Shigella flexneri.